Reading from the N-terminus, the 84-residue chain is CDC42 small effector protein 2-A (84 aa).

S-palmitoyl cysteine attachment occurs at residues C10 and C11. Residues 29-42 form the CRIB domain; the sequence is IGEPTNFVHTAHVG.

It belongs to the CDC42SE/SPEC family.

Its subcellular location is the cytoplasm. It localises to the cytoskeleton. The protein localises to the cell membrane. Functionally, probably involved in the organization of the actin cytoskeleton by acting downstream of CDC42, inducing actin filament assembly. This Xenopus tropicalis (Western clawed frog) protein is CDC42 small effector protein 2-A (cdc42se2-A).